Reading from the N-terminus, the 405-residue chain is Dynactin subunit 2 (405 aa).

The interval 1–25 (MADPKYADLPGIARNEPDVYETSDL) is disordered. N-acetylalanine is present on alanine 2. Tyrosine 6 is modified (phosphotyrosine). The residue at position 85 (serine 85) is a Phosphoserine. The residue at position 88 (tyrosine 88) is a Phosphotyrosine. A coiled-coil region spans residues 105-132 (YQRLLHEVQELTTEVEKIKMTVKESATE). Threonine 136 is subject to Phosphothreonine. The disordered stretch occupies residues 187-207 (KNTKGAGSGGKTTSGSPPDSS). Serine 324 is modified (phosphoserine).

The protein belongs to the dynactin subunit 2 family. As to quaternary structure, subunit of dynactin, a multiprotein complex part of a tripartite complex with dynein and a adapter, such as BICDL1, BICD2 or HOOK3. The dynactin complex is built around ACTR1A/ACTB filament and consists of an actin-related filament composed of a shoulder domain, a pointed end and a barbed end. Its length is defined by its flexible shoulder domain. The soulder is composed of 2 DCTN1 subunits, 4 DCTN2 and 2 DCTN3. The 4 DCNT2 (via N-terminus) bind the ACTR1A filament and act as molecular rulers to determine the length. The pointed end is important for binding dynein-dynactin cargo adapters and consists of 4 subunits: ACTR10, DCNT4, DCTN5 and DCTN6. The barbed end is composed of a CAPZA1:CAPZB heterodimers, which binds ACTR1A/ACTB filament and dynactin and stabilizes dynactin. Interacts with BICD2 and CEP135. Interacts with DYNAP. Interacts with ECPAS. Interacts with MAPRE1.

The protein resides in the cytoplasm. It localises to the cytoskeleton. It is found in the microtubule organizing center. The protein localises to the centrosome. Its subcellular location is the membrane. Its function is as follows. Part of the dynactin complex that activates the molecular motor dynein for ultra-processive transport along microtubules. In the dynactin soulder domain, binds the ACTR1A filament and acts as a molecular ruler to determine the length. Modulates cytoplasmic dynein binding to an organelle, and plays a role in prometaphase chromosome alignment and spindle organization during mitosis. Involved in anchoring microtubules to centrosomes. May play a role in synapse formation during brain development. The polypeptide is Dynactin subunit 2 (DCTN2) (Sus scrofa (Pig)).